A 128-amino-acid polypeptide reads, in one-letter code: Translation initiation factor 5A (128 aa).

Residue Lys35 is modified to Hypusine.

It belongs to the eIF-5A family.

The protein localises to the cytoplasm. In terms of biological role, functions by promoting the formation of the first peptide bond. In Methanocella arvoryzae (strain DSM 22066 / NBRC 105507 / MRE50), this protein is Translation initiation factor 5A (eIF5A).